Consider the following 472-residue polypeptide: 3-isopropylmalate dehydratase large subunit (472 aa).

3 residues coordinate [4Fe-4S] cluster: Cys-347, Cys-407, and Cys-410.

Belongs to the aconitase/IPM isomerase family. LeuC type 1 subfamily. Heterodimer of LeuC and LeuD. [4Fe-4S] cluster serves as cofactor.

It catalyses the reaction (2R,3S)-3-isopropylmalate = (2S)-2-isopropylmalate. The protein operates within amino-acid biosynthesis; L-leucine biosynthesis; L-leucine from 3-methyl-2-oxobutanoate: step 2/4. Catalyzes the isomerization between 2-isopropylmalate and 3-isopropylmalate, via the formation of 2-isopropylmaleate. The sequence is that of 3-isopropylmalate dehydratase large subunit from Parasynechococcus marenigrum (strain WH8102).